Reading from the N-terminus, the 150-residue chain is UPF0178 protein PSEEN5341 (150 aa).

The protein belongs to the UPF0178 family.

This chain is UPF0178 protein PSEEN5341, found in Pseudomonas entomophila (strain L48).